The primary structure comprises 285 residues: Protein FD (285 aa).

Residues 1–12 (MLSSAKHQRNHR) show a composition bias toward basic residues. Disordered stretches follow at residues 1 to 59 (MLSS…QKRS), 79 to 107 (NRHS…NSIF), 115 to 134 (LNQE…NGDS), 198 to 236 (SSSF…ARKQ), and 257 to 285 (KRQQ…TAPF). Residues 13–25 (LSATNKNQTLTKV) are compositionally biased toward polar residues. Residues 26-50 (SSISSSSPSSSSSSSSTSSSSPLPS) are compositionally biased toward low complexity. Polar residues predominate over residues 98 to 107 (HHNQNPNSIF). The bZIP domain occupies 214-277 (GNRRHKRMIK…AIQQPKKNTL (64 aa)). The tract at residues 216-235 (RRHKRMIKNRESAARSRARK) is basic motif. The interval 242–263 (LELEVAHLQAENARLKRQQDQL) is leucine-zipper. Residues 272–285 (PKKNTLQRSSTAPF) are compositionally biased toward polar residues. Thr282 carries the phosphothreonine modification.

The protein belongs to the bZIP family. Self-interacts. Interacts with FT and FDP/BZIP27. Interacts with GRF3 and GRF4, and in a calcium-independent manner, with CPK6 and CPK33. Phosphorylated at Thr-282 in a calcium-dependent manner by CPK6 and CPK33. In terms of tissue distribution, highly expressed in shoot apex.

It localises to the nucleus. In terms of biological role, transcription factor required for the transition to flowering promoted by FT. The sequence is that of Protein FD from Arabidopsis thaliana (Mouse-ear cress).